Reading from the N-terminus, the 76-residue chain is ATP synthase subunit 9, mitochondrial (76 aa).

Residue Met-1 is modified to N-formylmethionine. 2 helical membrane-spanning segments follow: residues 14–34 and 52–72; these read IATIGLTGAGIGIAIVFAALI and ILGFALSEATGLFCLMISFLL.

F-type ATP synthases have 2 components, the catalytic core F(1) and the membrane-embedded component F(0), linked together by a central stalk and a peripheral stalk. The central stalk, also called rotor shaft, is often seen as part of F(1). The peripheral stalk is seen as part of F(0). F(0) contains the membrane channel next to the rotor. F-type ATP synthases form dimers but each monomer functions independently in ATP generation. The dimer consists of 18 different polypeptides: ATP1 (subunit alpha, part of F(1), 3 molecules per monomer), ATP2 (subunit beta, part of F(1), 3 molecules per monomer), ATP3 (subunit gamma, part of the central stalk), ATP4 (subunit b, part of the peripheral stalk), ATP5/OSCP (subunit 5/OSCP, part of the peripheral stalk), ATP6 (subunit a, part of the peripheral stalk), ATP7 (subunit d, part of the peripheral stalk), ATP8 (subunit 8, part of the peripheral stalk), OLI1 (subunit c, part of the rotor, 10 molecules per monomer), ATP14 (subunit h, part of the peripheral stalk), ATP15 (subunit epsilon, part of the central stalk), ATP16 (subunit delta, part of the central stalk), ATP17 (subunit f, part of the peripheral stalk), ATP18 (subunit i/j, part of the peripheral stalk). Dimer-specific subunits are ATP19 (subunit k, at interface between monomers), ATP20 (subunit g, at interface between monomers), TIM11 (subunit e, at interface between monomers). Also contains subunit L.

It is found in the mitochondrion inner membrane. Functionally, mitochondrial membrane ATP synthase (F(1)F(0) ATP synthase or Complex V) produces ATP from ADP in the presence of a proton gradient across the membrane which is generated by electron transport complexes of the respiratory chain. F-type ATP synthases consist of two structural domains, F(1) - containing the extramembraneous catalytic core, and F(0) - containing the membrane proton channel, linked together by a central stalk and a peripheral stalk. During catalysis, ATP synthesis in the catalytic domain of F(1) is coupled via a rotary mechanism of the central stalk subunits to proton translocation. Part of the complex F(0) domain. A homomeric c-ring of 10 OLI1/ATP9 subunits is part of the complex rotary element. This chain is ATP synthase subunit 9, mitochondrial, found in Pichia angusta (Yeast).